The primary structure comprises 88 residues: MSQMDRTMQFNFPEDDQRANTRETLITVYQALEEKGYQPINQIVGYLLSGDPAYIPRHNDARNLIRKIERDELLEELVKSYLNDRRED.

It belongs to the UPF0297 family.

The chain is UPF0297 protein EAT1b_2723 from Exiguobacterium sp. (strain ATCC BAA-1283 / AT1b).